The following is a 243-amino-acid chain: Orotidine 5'-phosphate decarboxylase (243 aa).

Substrate is bound by residues D18, K39, 66–75 (DLKFHDIPAT), T130, R192, Q201, G221, and R222. K68 (proton donor) is an active-site residue.

It belongs to the OMP decarboxylase family. Type 1 subfamily. Homodimer.

The enzyme catalyses orotidine 5'-phosphate + H(+) = UMP + CO2. It participates in pyrimidine metabolism; UMP biosynthesis via de novo pathway; UMP from orotate: step 2/2. In terms of biological role, catalyzes the decarboxylation of orotidine 5'-monophosphate (OMP) to uridine 5'-monophosphate (UMP). The polypeptide is Orotidine 5'-phosphate decarboxylase (Synechococcus sp. (strain WH7803)).